Consider the following 283-residue polypeptide: D-alanine aminotransferase (283 aa).

Tyrosine 32 serves as a coordination point for substrate. Pyridoxal 5'-phosphate is bound at residue arginine 51. Arginine 99 and histidine 101 together coordinate substrate. Lysine 146 serves as the catalytic Proton acceptor. N6-(pyridoxal phosphate)lysine is present on lysine 146. Position 178 (glutamate 178) interacts with pyridoxal 5'-phosphate.

The protein belongs to the class-IV pyridoxal-phosphate-dependent aminotransferase family. As to quaternary structure, homodimer. It depends on pyridoxal 5'-phosphate as a cofactor.

The enzyme catalyses D-alanine + 2-oxoglutarate = D-glutamate + pyruvate. Its function is as follows. Acts on the D-isomers of alanine, leucine, aspartate, glutamate, aminobutyrate, norvaline and asparagine. The enzyme transfers an amino group from a substrate D-amino acid to the pyridoxal phosphate cofactor to form pyridoxamine and an alpha-keto acid in the first half-reaction. The second-half reaction is the reverse of the first, transferring the amino group from the pyridoxamine to a second alpha-keto acid to form the product D-amino acid via a ping-pong mechanism. This is an important process in the formation of D-alanine and D-glutamate, which are essential bacterial cell wall components. This Bacillus sp. (strain YM-1) protein is D-alanine aminotransferase (dat).